The chain runs to 343 residues: Armadillo repeat-containing protein 10 (343 aa).

The helical transmembrane segment at 5–27 threads the bilayer; the sequence is RGAGWVAAGLLLGAGACYCIYRL. The segment at 43 to 83 is disordered; it reads SKSAGALEEGTSEGQLCGRSARPQTGGTWESQWSKTSQPED. The residue at position 45 (Ser-45) is a Phosphoserine. Glu-50 is subject to Phosphothreonine. Residues 64–82 show a composition bias toward polar residues; it reads RPQTGGTWESQWSKTSQPE. Thr-85 carries the phosphothreonine modification. One copy of the ARM repeat lies at 138 to 180; the sequence is GGIPIVANKINHSNQSIKEKALNALNNLSVNVENQIKIKIYIS.

As to quaternary structure, interacts with the DNA-binding domain of p53/TP53. As to expression, expressed in all tissues tested with higher expression in placenta, liver, kidney, heart and brain.

It is found in the endoplasmic reticulum membrane. It localises to the mitochondrion outer membrane. Functionally, may play a role in cell survival and cell growth. May suppress the transcriptional activity of p53/TP53. In Homo sapiens (Human), this protein is Armadillo repeat-containing protein 10 (ARMC10).